A 137-amino-acid polypeptide reads, in one-letter code: Putative protein YjhV (137 aa).

Residues 1–16 are compositionally biased toward polar residues; that stretch reads MVGYHQTNQKTDTGKT. A disordered region spans residues 1–20; that stretch reads MVGYHQTNQKTDTGKTLTRR.

The sequence is that of Putative protein YjhV (yjhV) from Escherichia coli (strain K12).